Here is a 1997-residue protein sequence, read N- to C-terminus: Otoferlin (1997 aa).

Positions 1–98 (MALLIHLKTV…VEESHVEVTD (98 aa)) constitute a C2 1 domain. The Cytoplasmic portion of the chain corresponds to 1-1963 (MALLIHLKTV…ARYFLWHTYR (1963 aa)). The disordered stretch occupies residues 128 to 171 (WDDGDFLGDESLQEEEKDSQETDGLLPGSRPSSRPPGEKSFRRA). Positions 129 to 145 (DDGDFLGDESLQEEEKD) are enriched in acidic residues. C2 domains lie at 236 to 357 (KRSK…HKWA) and 400 to 531 (IEGN…FLPT). The tract at residues 642–694 (NEVDGLSRPQRPRPRKEPGDEEEVDLIQNASDDEAGDAGDLASVSSTPPMRPQ) is disordered. Acidic residues predominate over residues 660 to 678 (GDEEEVDLIQNASDDEAGD). Positions 792-821 (RERLKSCMRELENMGQQARMLRAQVKRHTV) form a coiled coil. C2 domains are found at residues 944-1069 (LHAF…PPRF) and 1115-1242 (DRGP…PSWN). Positions 976, 982, 1038, 1040, and 1046 each coordinate Ca(2+). Disordered stretches follow at residues 1299–1324 (AEEE…PDES) and 1343–1405 (LRQQ…KPKI). Acidic residues-rich tracts occupy residues 1314 to 1324 (EEPEEEEPDES) and 1352 to 1361 (DLEEKEEVDN). A compositionally biased stretch (basic and acidic residues) spans 1370–1383 (KGKEKARAAKEEKK). Residues 1387–1396 (QSSGSGQGSE) are compositionally biased toward low complexity. C2 domains are found at residues 1464–1593 (LPED…ATCG) and 1714–1865 (DMPA…KQCT). Positions 1508, 1514, 1563, 1565, 1571, 1836, 1839, and 1842 each coordinate Ca(2+). A helical transmembrane segment spans residues 1964-1984 (WLLLKLLLLLLLLLLLALFLY). Residues 1985–1997 (SVPGYLVKKILGA) are Extracellular-facing.

It belongs to the ferlin family. As to quaternary structure, interacts with SNAP2; the interaction is direct. Interacts with STX1; the interaction is direct. Interacts with RAB8B. Requires Ca(2+) as cofactor. In terms of tissue distribution, isoform 1 and isoform 3 are found in adult brain. Isoform 2 is expressed in the fetus and in adult brain, heart, placenta, skeletal muscle and kidney.

The protein localises to the cytoplasmic vesicle. It localises to the secretory vesicle. The protein resides in the synaptic vesicle membrane. It is found in the basolateral cell membrane. Its subcellular location is the endoplasmic reticulum membrane. The protein localises to the golgi apparatus membrane. It localises to the presynaptic cell membrane. The protein resides in the cell membrane. Key calcium ion sensor involved in the Ca(2+)-triggered synaptic vesicle-plasma membrane fusion and in the control of neurotransmitter release at these output synapses. Interacts in a calcium-dependent manner to the presynaptic SNARE proteins at ribbon synapses of cochlear inner hair cells (IHCs) to trigger exocytosis of neurotransmitter. Also essential to synaptic exocytosis in immature outer hair cells (OHCs). May also play a role within the recycling of endosomes. The protein is Otoferlin (OTOF) of Homo sapiens (Human).